The sequence spans 696 residues: Elongation factor G (696 aa).

The tr-type G domain maps to 8–286; the sequence is EDVRNIGIAA…AVVAYLPAPT (279 aa). Residues 17–24, 81–85, and 135–138 each bind GTP; these read AHIDAGKT, DTPGH, and NKMD.

This sequence belongs to the TRAFAC class translation factor GTPase superfamily. Classic translation factor GTPase family. EF-G/EF-2 subfamily.

The protein localises to the cytoplasm. Its function is as follows. Catalyzes the GTP-dependent ribosomal translocation step during translation elongation. During this step, the ribosome changes from the pre-translocational (PRE) to the post-translocational (POST) state as the newly formed A-site-bound peptidyl-tRNA and P-site-bound deacylated tRNA move to the P and E sites, respectively. Catalyzes the coordinated movement of the two tRNA molecules, the mRNA and conformational changes in the ribosome. This Sulfurimonas denitrificans (strain ATCC 33889 / DSM 1251) (Thiomicrospira denitrificans (strain ATCC 33889 / DSM 1251)) protein is Elongation factor G.